The following is an 87-amino-acid chain: Small ribosomal subunit protein bS18 (87 aa).

The disordered stretch occupies residues 1-21; it reads MRHKPTPPKGNKSLGNALASK.

This sequence belongs to the bacterial ribosomal protein bS18 family. As to quaternary structure, part of the 30S ribosomal subunit. Forms a tight heterodimer with protein bS6.

Binds as a heterodimer with protein bS6 to the central domain of the 16S rRNA, where it helps stabilize the platform of the 30S subunit. This chain is Small ribosomal subunit protein bS18, found in Chlorobium phaeobacteroides (strain DSM 266 / SMG 266 / 2430).